The primary structure comprises 226 residues: Probable C4-dicarboxylate response regulator DctR (226 aa).

The Response regulatory domain occupies lysine 7–lysine 123. Position 58 is a 4-aspartylphosphate (aspartate 58). The H-T-H motif DNA-binding region spans alanine 179–aspartate 198.

Post-translationally, phosphorylated by DctS.

The protein resides in the cytoplasm. Member of the two-component regulatory system DctS/DctR. Essential for expression of dctP. This is Probable C4-dicarboxylate response regulator DctR (dctR) from Bacillus subtilis (strain 168).